Here is a 716-residue protein sequence, read N- to C-terminus: MAPSIKLSTMATSLHRAHGTSALLRRPRLWAPRLSSIHATPTIANLRASFTTSSPRLFAPNGSAKDESKPAVSTVPKTTGRGPSDPLAAIDKTAQEQRKADWAIMKEMSKYLWPKGSWGDKARVLLAIGLLVGGKVLNVQVPFYFREIVDSLNIDFSTTGGSVTAVAGAMILGYGAARVGAVVSQELRNAVFASVAQKAIRKVARNTFEHLLNLDLSFHLSKQTGGLTRAIDRGTKGISFLLTSMVFHIVPTALEISMVCGILTYNFGWQYAALTALTMVSYTAFTILTTAWRTKFRRQANAADNKASTIAVDSLINYEAVKYFNNEAYEVGRYDKALAQYEKNSIKVATSLAFLNSGQNIIFSSALTVMMYMGAHGVATGQLTVGDLVLINQLVFQLSVPLNFLGSVYRELRQSLLDMETLFNLQKVNVTIKEQPNAKPLTLTRGGEIEFKDVTFGYHPESPILRDLSLTIPAGKKVAIVGPSGCGKSTLLRLLFRFYDPQKGAIYIDGQDIRSVTLESLRRAIGVVPQDTPLFNDTVEHNIRYGNLSATPEQVIEAAKAAHIHEKIISWRDGYNTKVGERGLMISGGEKQRLAVSRLILKDPPLLFFDEATSALDTHTEQALMENINAILKGLGQKGEKKTSLFVAHRLRTIYDSDLIIVLKEGRVAEQGTHRELMERNGVYAQLWRAQEMLMTEEGEVSKKGEKEEVGEKKEA.

A mitochondrion-targeting transit peptide spans 1-18 (MAPSIKLSTMATSLHRAH). Residues 19 to 123 (GTSALLRRPR…PKGSWGDKAR (105 aa)) are Mitochondrial matrix-facing. The tract at residues 57-87 (LFAPNGSAKDESKPAVSTVPKTTGRGPSDPL) is disordered. A helical membrane pass occupies residues 124–145 (VLLAIGLLVGGKVLNVQVPFYF). Residues 124–414 (VLLAIGLLVG…LGSVYRELRQ (291 aa)) form the ABC transmembrane type-1 domain. Over 146-168 (REIVDSLNIDFSTTGGSVTAVAG) the chain is Mitochondrial intermembrane. A helical transmembrane segment spans residues 169 to 192 (AMILGYGAARVGAVVSQELRNAVF). Residues 193–241 (ASVAQKAIRKVARNTFEHLLNLDLSFHLSKQTGGLTRAIDRGTKGISFL) lie on the Mitochondrial matrix side of the membrane. Residues 242–265 (LTSMVFHIVPTALEISMVCGILTY) traverse the membrane as a helical segment. Asparagine 266 is a topological domain (mitochondrial intermembrane). Residues 267–287 (FGWQYAALTALTMVSYTAFTI) traverse the membrane as a helical segment. At 288–353 (LTTAWRTKFR…NSIKVATSLA (66 aa)) the chain is on the mitochondrial matrix side. Glutathione-binding positions include 293–297 (RTKFR) and 356–359 (NSGQ). The helical transmembrane segment at 354–372 (FLNSGQNIIFSSALTVMMY) threads the bilayer. At 373–387 (MGAHGVATGQLTVGD) the chain is on the mitochondrial intermembrane side. A helical membrane pass occupies residues 388–409 (LVLINQLVFQLSVPLNFLGSVY). Glycine 406 lines the glutathione pocket. Over 410–716 (RELRQSLLDM…KEEVGEKKEA (307 aa)) the chain is Mitochondrial matrix. One can recognise an ABC transporter domain in the interval 449–690 (IEFKDVTFGY…NGVYAQLWRA (242 aa)). Residues tyrosine 458 and 482 to 493 (GPSGCGKSTLLR) each bind ATP. Residues 697–716 (EEGEVSKKGEKEEVGEKKEA) are disordered. Residues 700-716 (EVSKKGEKEEVGEKKEA) show a composition bias toward basic and acidic residues.

Belongs to the ABC transporter superfamily. ABCB family. Heavy Metal importer (TC 3.A.1.210) subfamily. Homodimer.

The protein localises to the mitochondrion inner membrane. Functionally, performs an essential function in the generation of cytoplasmic iron-sulfur proteins by mediating the ATP-dependent export of Fe/S cluster precursors synthesized by egt-3 and other mitochondrial proteins. Hydrolyzes ATP. Binds glutathione and may function by transporting a glutathione-conjugated iron-sulfur compound. The protein is Iron-sulfur clusters transporter atm1, mitochondrial of Neurospora crassa (strain ATCC 24698 / 74-OR23-1A / CBS 708.71 / DSM 1257 / FGSC 987).